Here is a 110-residue protein sequence, read N- to C-terminus: UPF0122 protein BCA_3946 (110 aa).

It belongs to the UPF0122 family.

In terms of biological role, might take part in the signal recognition particle (SRP) pathway. This is inferred from the conservation of its genetic proximity to ftsY/ffh. May be a regulatory protein. The chain is UPF0122 protein BCA_3946 from Bacillus cereus (strain 03BB102).